We begin with the raw amino-acid sequence, 86 residues long: Small ribosomal subunit protein uS17 (86 aa).

Belongs to the universal ribosomal protein uS17 family. In terms of assembly, part of the 30S ribosomal subunit.

One of the primary rRNA binding proteins, it binds specifically to the 5'-end of 16S ribosomal RNA. The protein is Small ribosomal subunit protein uS17 of Roseiflexus sp. (strain RS-1).